A 339-amino-acid polypeptide reads, in one-letter code: Serine racemase (339 aa).

Mg(2+) is bound at residue Glu13. 5 residues coordinate ATP: Ser31, Ser32, Ile33, Lys51, and Thr52. Residue Lys56 is the Proton acceptor of the active site. Position 56 is an N6-(pyridoxal phosphate)lysine (Lys56). Pro69 lines the Ca(2+) pocket. Residue Thr71 is modified to Phosphothreonine. Residue Thr81 participates in Ca(2+) binding. Ser84 (proton acceptor) is an active-site residue. Position 86 (Asn86) interacts with pyridoxal 5'-phosphate. An ATP-binding site is contributed by Gln89. Cys113 is subject to S-nitrosocysteine. Tyr121 contacts ATP. A pyridoxal 5'-phosphate-binding site is contributed by Asn154. Position 178 (Asp178) interacts with Mg(2+). 5 residues coordinate pyridoxal 5'-phosphate: Gly185, Gly186, Gly187, Gly188, and Met189. Positions 210, 214, 216, and 247 each coordinate Mg(2+). 4 residues coordinate Ca(2+): Glu210, Ala214, Asp216, and Asn247. Residues Glu210, Ala214, and Asp216 each contribute to the Mn(2+) site. Lys279 lines the ATP pocket. Pyridoxal 5'-phosphate is bound at residue Ser313. Asn316 provides a ligand contact to ATP.

The protein belongs to the serine/threonine dehydratase family. In terms of assembly, homodimer. Mg(2+) is required as a cofactor. The cofactor is Mn(2+). It depends on Ca(2+) as a cofactor. Pyridoxal 5'-phosphate serves as cofactor. S-nitrosylated, leading to decrease the enzyme activity. Expressed in the hippocampus (at protein level). Expressed in the small intestine.

It catalyses the reaction L-serine = D-serine. The enzyme catalyses D-serine = pyruvate + NH4(+). The catalysed reaction is L-serine = pyruvate + NH4(+). Allosterically activated by magnesium, and possibly also other divalent metal cations. Allosterically activated by ATP, ADP or GTP. Its function is as follows. Catalyzes the synthesis of D-serine from L-serine. D-serine is a key coagonist with glutamate at NMDA receptors. Has dehydratase activity towards both L-serine and D-serine. The chain is Serine racemase (Srr) from Mus musculus (Mouse).